The primary structure comprises 196 residues: Probable malonic semialdehyde reductase RutE (196 aa).

Belongs to the nitroreductase family. HadB/RutE subfamily. FMN serves as cofactor.

It carries out the reaction 3-hydroxypropanoate + NADP(+) = 3-oxopropanoate + NADPH + H(+). May reduce toxic product malonic semialdehyde to 3-hydroxypropionic acid, which is excreted. This chain is Probable malonic semialdehyde reductase RutE, found in Escherichia coli O81 (strain ED1a).